The chain runs to 336 residues: Holliday junction branch migration complex subunit RuvB (336 aa).

A large ATPase domain (RuvB-L) region spans residues 4–184 (ADRLISAGAT…FGIVQRLEFY (181 aa)). Residues I23, R24, G65, K68, T69, T70, 131-133 (EDY), R174, Y184, and R221 contribute to the ATP site. Residue T69 coordinates Mg(2+). The tract at residues 185–255 (QVPDLQHIVG…IAAQALDMLN (71 aa)) is small ATPAse domain (RuvB-S). A head domain (RuvB-H) region spans residues 258 to 336 (AEGFDYMDRK…HFGITPPEMP (79 aa)). Residues R294, R313, and R318 each coordinate DNA.

The protein belongs to the RuvB family. Homohexamer. Forms an RuvA(8)-RuvB(12)-Holliday junction (HJ) complex. HJ DNA is sandwiched between 2 RuvA tetramers; dsDNA enters through RuvA and exits via RuvB. An RuvB hexamer assembles on each DNA strand where it exits the tetramer. Each RuvB hexamer is contacted by two RuvA subunits (via domain III) on 2 adjacent RuvB subunits; this complex drives branch migration. In the full resolvosome a probable DNA-RuvA(4)-RuvB(12)-RuvC(2) complex forms which resolves the HJ.

The protein resides in the cytoplasm. The enzyme catalyses ATP + H2O = ADP + phosphate + H(+). The RuvA-RuvB-RuvC complex processes Holliday junction (HJ) DNA during genetic recombination and DNA repair, while the RuvA-RuvB complex plays an important role in the rescue of blocked DNA replication forks via replication fork reversal (RFR). RuvA specifically binds to HJ cruciform DNA, conferring on it an open structure. The RuvB hexamer acts as an ATP-dependent pump, pulling dsDNA into and through the RuvAB complex. RuvB forms 2 homohexamers on either side of HJ DNA bound by 1 or 2 RuvA tetramers; 4 subunits per hexamer contact DNA at a time. Coordinated motions by a converter formed by DNA-disengaged RuvB subunits stimulates ATP hydrolysis and nucleotide exchange. Immobilization of the converter enables RuvB to convert the ATP-contained energy into a lever motion, pulling 2 nucleotides of DNA out of the RuvA tetramer per ATP hydrolyzed, thus driving DNA branch migration. The RuvB motors rotate together with the DNA substrate, which together with the progressing nucleotide cycle form the mechanistic basis for DNA recombination by continuous HJ branch migration. Branch migration allows RuvC to scan DNA until it finds its consensus sequence, where it cleaves and resolves cruciform DNA. The protein is Holliday junction branch migration complex subunit RuvB of Salmonella agona (strain SL483).